A 430-amino-acid polypeptide reads, in one-letter code: Tol-Pal system protein TolB (430 aa).

A signal peptide spans 1–21; sequence MKQAFRVALGFLVLWASVLHA.

This sequence belongs to the TolB family. As to quaternary structure, the Tol-Pal system is composed of five core proteins: the inner membrane proteins TolA, TolQ and TolR, the periplasmic protein TolB and the outer membrane protein Pal. They form a network linking the inner and outer membranes and the peptidoglycan layer.

The protein resides in the periplasm. Part of the Tol-Pal system, which plays a role in outer membrane invagination during cell division and is important for maintaining outer membrane integrity. TolB occupies a key intermediary position in the Tol-Pal system because it communicates directly with both membrane-embedded components, Pal in the outer membrane and TolA in the inner membrane. The protein is Tol-Pal system protein TolB of Yersinia enterocolitica serotype O:8 / biotype 1B (strain NCTC 13174 / 8081).